The chain runs to 262 residues: Nodulation protein J (262 aa).

Residues 33 to 259 (ASILGNLADP…FLSTALLRRR (227 aa)) enclose the ABC transmembrane type-2 domain. 7 helical membrane passes run 35-55 (ILGN…GLGM), 62-82 (GVSY…MTAS), 102-122 (AILH…AWAA), 127-147 (LAGT…WVSL), 148-168 (LYAL…AMIV), 177-197 (YFIF…GAVF), and 231-251 (LVHV…PFFL).

The protein belongs to the ABC-2 integral membrane protein family. Lipooligosaccharide exporter (TC 3.A.1.102) subfamily. The complex is composed of two ATP-binding proteins (NodI) and two transmembrane proteins (NodJ).

Its subcellular location is the cell inner membrane. Part of the ABC transporter complex NodIJ involved in the export of the nodulation factors (Nod factors), the bacterial signal molecules that induce symbiosis and subsequent nodulation induction. Nod factors are LCO (lipo-chitin oligosaccharide), a modified beta-1,4-linked N-acetylglucosamine oligosaccharide. This subunit encodes the transporter. The protein is Nodulation protein J (nodJ) of Rhizobium meliloti (strain 1021) (Ensifer meliloti).